The following is a 418-amino-acid chain: UDP-N-acetylglucosamine 1-carboxyvinyltransferase (418 aa).

Position 22–23 (22–23) interacts with phosphoenolpyruvate; it reads KN. Arg-92 provides a ligand contact to UDP-N-acetyl-alpha-D-glucosamine. Cys-116 serves as the catalytic Proton donor. Cys-116 carries the 2-(S-cysteinyl)pyruvic acid O-phosphothioketal modification. The UDP-N-acetyl-alpha-D-glucosamine site is built by Asp-305 and Val-327.

This sequence belongs to the EPSP synthase family. MurA subfamily.

The protein resides in the cytoplasm. The enzyme catalyses phosphoenolpyruvate + UDP-N-acetyl-alpha-D-glucosamine = UDP-N-acetyl-3-O-(1-carboxyvinyl)-alpha-D-glucosamine + phosphate. It participates in cell wall biogenesis; peptidoglycan biosynthesis. Its function is as follows. Cell wall formation. Adds enolpyruvyl to UDP-N-acetylglucosamine. This is UDP-N-acetylglucosamine 1-carboxyvinyltransferase from Endomicrobium trichonymphae.